The primary structure comprises 205 residues: Recombination protein RecR (205 aa).

A C4-type zinc finger spans residues 59–74 (CARCNTFCEGGLCDIC). The Toprim domain maps to 82–177 (RRLMVVHMPA…KVSRLSQGIP (96 aa)).

It belongs to the RecR family.

Functionally, may play a role in DNA repair. It seems to be involved in an RecBC-independent recombinational process of DNA repair. It may act with RecF and RecO. This is Recombination protein RecR from Neisseria gonorrhoeae (strain ATCC 700825 / FA 1090).